We begin with the raw amino-acid sequence, 432 residues long: Adenylosuccinate synthetase (432 aa).

Residues 13-19 (GDEGKGK) and 41-43 (GHT) contribute to the GTP site. D14 functions as the Proton acceptor in the catalytic mechanism. Positions 14 and 41 each coordinate Mg(2+). IMP-binding positions include 14–17 (DEGK), 39–42 (NAGH), T130, R144, Q225, T240, and R304. H42 acts as the Proton donor in catalysis. Position 300-306 (300-306 (ATTGRRR)) interacts with substrate. GTP-binding positions include R306, 332–334 (KLD), and 415–417 (STG).

The protein belongs to the adenylosuccinate synthetase family. In terms of assembly, homodimer. Requires Mg(2+) as cofactor.

The protein localises to the cytoplasm. The enzyme catalyses IMP + L-aspartate + GTP = N(6)-(1,2-dicarboxyethyl)-AMP + GDP + phosphate + 2 H(+). The protein operates within purine metabolism; AMP biosynthesis via de novo pathway; AMP from IMP: step 1/2. In terms of biological role, plays an important role in the de novo pathway of purine nucleotide biosynthesis. Catalyzes the first committed step in the biosynthesis of AMP from IMP. This Salmonella heidelberg (strain SL476) protein is Adenylosuccinate synthetase.